A 357-amino-acid chain; its full sequence is Alanine racemase (357 aa).

Catalysis depends on Lys-33, which acts as the Proton acceptor; specific for D-alanine. At Lys-33 the chain carries N6-(pyridoxal phosphate)lysine. Substrate is bound at residue Arg-130. The active-site Proton acceptor; specific for L-alanine is the Tyr-252. Residue Met-300 coordinates substrate.

This sequence belongs to the alanine racemase family. Requires pyridoxal 5'-phosphate as cofactor.

It catalyses the reaction L-alanine = D-alanine. Its pathway is amino-acid biosynthesis; D-alanine biosynthesis; D-alanine from L-alanine: step 1/1. Functionally, catalyzes the interconversion of L-alanine and D-alanine. May also act on other amino acids. This is Alanine racemase (alr) from Acidiphilium cryptum (strain JF-5).